The sequence spans 425 residues: Dihydroorotase (425 aa).

2 residues coordinate Zn(2+): H56 and H58. Substrate contacts are provided by residues 58 to 60 (HWR) and N90. D147, H174, and H227 together coordinate Zn(2+). N273 contributes to the substrate binding site. Zn(2+) is bound at residue D300. Residue D300 is part of the active site. Substrate is bound by residues H304 and 318–319 (FG).

This sequence belongs to the metallo-dependent hydrolases superfamily. DHOase family. Class I DHOase subfamily. Zn(2+) serves as cofactor.

It carries out the reaction (S)-dihydroorotate + H2O = N-carbamoyl-L-aspartate + H(+). It participates in pyrimidine metabolism; UMP biosynthesis via de novo pathway; (S)-dihydroorotate from bicarbonate: step 3/3. In terms of biological role, catalyzes the reversible cyclization of carbamoyl aspartate to dihydroorotate. This is Dihydroorotase from Fusobacterium nucleatum subsp. nucleatum (strain ATCC 25586 / DSM 15643 / BCRC 10681 / CIP 101130 / JCM 8532 / KCTC 2640 / LMG 13131 / VPI 4355).